Here is a 954-residue protein sequence, read N- to C-terminus: Glycine dehydrogenase (decarboxylating) (954 aa).

Residues 1–13 (MTELLQSLSTQNE) are compositionally biased toward polar residues. Residues 1-24 (MTELLQSLSTQNEFVARHNGPNKS) are disordered. N6-(pyridoxal phosphate)lysine is present on Lys-704.

This sequence belongs to the GcvP family. In terms of assembly, the glycine cleavage system is composed of four proteins: P, T, L and H. Requires pyridoxal 5'-phosphate as cofactor.

The enzyme catalyses N(6)-[(R)-lipoyl]-L-lysyl-[glycine-cleavage complex H protein] + glycine + H(+) = N(6)-[(R)-S(8)-aminomethyldihydrolipoyl]-L-lysyl-[glycine-cleavage complex H protein] + CO2. Its function is as follows. The glycine cleavage system catalyzes the degradation of glycine. The P protein binds the alpha-amino group of glycine through its pyridoxal phosphate cofactor; CO(2) is released and the remaining methylamine moiety is then transferred to the lipoamide cofactor of the H protein. The sequence is that of Glycine dehydrogenase (decarboxylating) from Vibrio campbellii (strain ATCC BAA-1116).